The following is a 349-amino-acid chain: Autophagy-related protein 3 (349 aa).

The interval 95-173 (ALVNDGDDFK…IRDSGADSKN (79 aa)) is flexible region. The Glycyl thioester intermediate role is filled by Cys244. The segment at 248–325 (SVMKTLLDRA…DQEVAIRVDQ (78 aa)) is handle region. The ATG8 interaction motif (AIM) signature appears at 306 to 309 (WEEV).

Belongs to the ATG3 family. As to quaternary structure, monomer. Interacts with ATG8 through an intermediate thioester bond between Cys-244 and the C-terminal Gly of ATG8. Interacts with the C-terminal region of the E1-like ATG7 enzyme. Also interacts with the ATG12-ATG5 conjugate.

Its subcellular location is the cytoplasm. In terms of biological role, E2 conjugating enzyme required for the cytoplasm to vacuole transport (Cvt) and autophagy. Required for selective autophagic degradation of the nucleus (nucleophagy) as well as for mitophagy which contributes to regulate mitochondrial quantity and quality by eliminating the mitochondria to a basal level to fulfill cellular energy requirements and preventing excess ROS production. Responsible for the E2-like covalent binding of phosphatidylethanolamine to the C-terminal Gly of ATG8. The ATG12-ATG5 conjugate plays a role of an E3 and promotes the transfer of ATG8 from ATG3 to phosphatidylethanolamine (PE). This step is required for the membrane association of ATG8. The formation of the ATG8-phosphatidylethanolamine conjugate is essential for autophagy and for the cytoplasm to vacuole transport (Cvt). The ATG8-PE conjugate mediates tethering between adjacent membranes and stimulates membrane hemifusion, leading to expansion of the autophagosomal membrane during autophagy. Autophagy is required for proper vegetative growth, asexual/sexual reproduction, and full virulence. Autophagy is particularly involved in the biosynthesis of deoxynivalenol (DON), an important virulence determinant. The polypeptide is Autophagy-related protein 3 (Gibberella zeae (strain ATCC MYA-4620 / CBS 123657 / FGSC 9075 / NRRL 31084 / PH-1) (Wheat head blight fungus)).